The primary structure comprises 624 residues: Sulfite reductase [ferredoxin] (624 aa).

Residues 52-137 (YQQDNRDNRV…ENLGSTISAC (86 aa)) constitute a cross-link (3'-(S-cysteinyl)-tyrosine (Tyr-Cys)). 4 residues coordinate [4Fe-4S] cluster: Cys-446, Cys-452, Cys-491, and Cys-495. Cys-495 lines the siroheme pocket.

It belongs to the nitrite and sulfite reductase 4Fe-4S domain family. As to quaternary structure, monomer. Requires siroheme as cofactor. It depends on [4Fe-4S] cluster as a cofactor.

It catalyses the reaction hydrogen sulfide + 6 oxidized [2Fe-2S]-[ferredoxin] + 3 H2O = sulfite + 6 reduced [2Fe-2S]-[ferredoxin] + 7 H(+). Its function is as follows. Catalyzes the reduction of sulfite to sulfide, a step in the biosynthesis of sulfur-containing amino acids and cofactors. The sequence is that of Sulfite reductase [ferredoxin] (sir) from Synechococcus elongatus (strain ATCC 33912 / PCC 7942 / FACHB-805) (Anacystis nidulans R2).